The chain runs to 83 residues: Small ribosomal subunit protein eS21 (83 aa).

Belongs to the eukaryotic ribosomal protein eS21 family. As to quaternary structure, component of the 40S small ribosomal subunit.

It is found in the cytoplasm. The protein localises to the cytosol. Its subcellular location is the rough endoplasmic reticulum. This chain is Small ribosomal subunit protein eS21 (RpS21), found in Spodoptera frugiperda (Fall armyworm).